Consider the following 307-residue polypeptide: Isethionate sulfite-lyase activating enzyme (307 aa).

Positions 22–307 (HDGPGIRTVV…EAVVAQTADS (286 aa)) constitute a Radical SAM core domain. Residues Cys36, Cys40, Cys43, Cys62, Cys68, Cys71, Cys75, Cys95, Cys98, Cys102, and Cys106 each contribute to the [4Fe-4S] cluster site. 42-44 (WCS) lines the S-adenosyl-L-methionine pocket. 2 consecutive 4Fe-4S ferredoxin-type domains span residues 53-85 (VELA…RAED) and 86-117 (DTIS…YGAH). S-adenosyl-L-methionine-binding positions include Gly146, 195-197 (DIK), and His268.

The protein belongs to the organic radical-activating enzymes family. In terms of assembly, monomer. It depends on [4Fe-4S] cluster as a cofactor.

It carries out the reaction glycyl-[protein] + reduced [flavodoxin] + S-adenosyl-L-methionine = glycin-2-yl radical-[protein] + semiquinone [flavodoxin] + 5'-deoxyadenosine + L-methionine + H(+). The protein operates within organosulfur degradation; alkanesulfonate degradation. In terms of biological role, involved in an anaerobic respiration pathway that converts the sulfonate isethionate (2-hydroxyethanesulfonate) to ammonia, acetate and sulfide. Catalyzes activation of the isethionate sulfite-lyase IseG under anaerobic conditions by generation of an organic free radical on a glycine residue, via a homolytic cleavage of S-adenosyl-L-methionine (SAM). This Nitratidesulfovibrio vulgaris (strain ATCC 29579 / DSM 644 / CCUG 34227 / NCIMB 8303 / VKM B-1760 / Hildenborough) (Desulfovibrio vulgaris) protein is Isethionate sulfite-lyase activating enzyme.